An 89-amino-acid polypeptide reads, in one-letter code: uncharacterized protein (89 aa).

This is an uncharacterized protein from Treponema pallidum (strain Nichols).